Here is a 136-residue protein sequence, read N- to C-terminus: uncharacterized protein (136 aa).

The protein resides in the mitochondrion. This is an uncharacterized protein from Marchantia polymorpha (Common liverwort).